Reading from the N-terminus, the 147-residue chain is Large ribosomal subunit protein uL13 (147 aa).

Positions 128–147 are disordered; sequence DQHPHGAQQPQPFEITQVAQ.

The protein belongs to the universal ribosomal protein uL13 family. Part of the 50S ribosomal subunit.

In terms of biological role, this protein is one of the early assembly proteins of the 50S ribosomal subunit, although it is not seen to bind rRNA by itself. It is important during the early stages of 50S assembly. This Streptomyces coelicolor (strain ATCC BAA-471 / A3(2) / M145) protein is Large ribosomal subunit protein uL13.